The chain runs to 906 residues: Protein translocase subunit SecA (906 aa).

Residues Q87, 105–109 (GEGKT), and D507 contribute to the ATP site. 4 residues coordinate Zn(2+): C890, C892, C901, and H902.

This sequence belongs to the SecA family. In terms of assembly, monomer and homodimer. Part of the essential Sec protein translocation apparatus which comprises SecA, SecYEG and auxiliary proteins SecDF-YajC and YidC. Requires Zn(2+) as cofactor.

It is found in the cell inner membrane. It localises to the cytoplasm. It carries out the reaction ATP + H2O + cellular proteinSide 1 = ADP + phosphate + cellular proteinSide 2.. Its function is as follows. Part of the Sec protein translocase complex. Interacts with the SecYEG preprotein conducting channel. Has a central role in coupling the hydrolysis of ATP to the transfer of proteins into and across the cell membrane, serving both as a receptor for the preprotein-SecB complex and as an ATP-driven molecular motor driving the stepwise translocation of polypeptide chains across the membrane. The sequence is that of Protein translocase subunit SecA from Thiobacillus denitrificans (strain ATCC 25259 / T1).